We begin with the raw amino-acid sequence, 210 residues long: NADH dehydrogenase [ubiquinone] iron-sulfur protein 8, mitochondrial (210 aa).

The transit peptide at 1–34 (MRCLTMPTLLRALAQAAHTGPPGGRTLHSSAVAA) directs the protein to the mitochondrion. 4Fe-4S ferredoxin-type domains lie at 102 to 131 (RRYP…IEAE) and 141 to 170 (TRYD…EGPN). Positions 111, 114, 117, 121, 150, 153, 156, and 160 each coordinate [4Fe-4S] cluster.

The protein belongs to the complex I 23 kDa subunit family. In terms of assembly, core subunit of respiratory chain NADH dehydrogenase (Complex I) which is composed of 45 different subunits. This is a component of the iron-sulfur (IP) fragment of the enzyme. Interacts with RAB5IF. Requires [4Fe-4S] cluster as cofactor.

Its subcellular location is the mitochondrion inner membrane. It catalyses the reaction a ubiquinone + NADH + 5 H(+)(in) = a ubiquinol + NAD(+) + 4 H(+)(out). Its function is as follows. Core subunit of the mitochondrial membrane respiratory chain NADH dehydrogenase (Complex I) which catalyzes electron transfer from NADH through the respiratory chain, using ubiquinone as an electron acceptor. Essential for the catalytic activity and assembly of complex I. The chain is NADH dehydrogenase [ubiquinone] iron-sulfur protein 8, mitochondrial (NDUFS8) from Macaca fascicularis (Crab-eating macaque).